A 456-amino-acid chain; its full sequence is MCKLPFSKSRMRQLMEAYIRQKRASPGMVQASDLQISRPMSGMRSNSRELHAYDGPMQFISSPLNPDQILTNGSPVGGTVAMNSTRNHSNNMRTLSTISQEADLIEEISSHELEDEESSPVTVIEQQQTAPHSANSTHSQRPSTTRQPSFNDTLDEDDYTNRNIAGAAPVRPVGLASSPYKEAGLDGSSMETSNGAGGESEGDVIGNIDQFVMQPAPQGVLYKCRITRDRKGMDRGLFPIYYLHLERDYGKKIFLLGGRKRKKSKTSNYIVSCDPTDLSRSADGFCGKLRSNVFGTSFTVFDSGNKDSTDSPRLDLAVIIYDTNILGFKGPRNMTVILPGMTEDDQRVKISSADPKQTGILDLYKMKNMDNIVELHNKTPVWNDETQSYVLNFHGRVTQASVKNFQLVHDSDPEYIVMQFGRTSEDVFTMDYRYPLCAMQAFAIALSSFDGKIACE.

Residues 111–202 are disordered; sequence HELEDEESSP…SNGAGGESEG (92 aa). Polar residues predominate over residues 120-152; that stretch reads PVTVIEQQQTAPHSANSTHSQRPSTTRQPSFND. Serine 149 is modified (phosphoserine).

Belongs to the TUB family.

The protein resides in the cytoplasm. It localises to the nucleus. Its subcellular location is the cell projection. It is found in the cilium membrane. The protein localises to the rhabdomere. The protein is Protein king tubby of Drosophila pseudoobscura pseudoobscura (Fruit fly).